Here is a 429-residue protein sequence, read N- to C-terminus: 5-methylthioadenosine/S-adenosylhomocysteine deaminase (429 aa).

Residues histidine 66 and histidine 68 each contribute to the Zn(2+) site. Substrate is bound by residues glutamate 95, arginine 147, arginine 158, and histidine 181. Histidine 208 is a binding site for Zn(2+). Residues glutamate 211 and aspartate 296 each coordinate substrate. Aspartate 296 contributes to the Zn(2+) binding site.

This sequence belongs to the metallo-dependent hydrolases superfamily. MTA/SAH deaminase family. Zn(2+) serves as cofactor.

It carries out the reaction S-adenosyl-L-homocysteine + H2O + H(+) = S-inosyl-L-homocysteine + NH4(+). The enzyme catalyses S-methyl-5'-thioadenosine + H2O + H(+) = S-methyl-5'-thioinosine + NH4(+). Its function is as follows. Catalyzes the deamination of 5-methylthioadenosine and S-adenosyl-L-homocysteine into 5-methylthioinosine and S-inosyl-L-homocysteine, respectively. Is also able to deaminate adenosine. This Caldicellulosiruptor saccharolyticus (strain ATCC 43494 / DSM 8903 / Tp8T 6331) protein is 5-methylthioadenosine/S-adenosylhomocysteine deaminase.